The sequence spans 466 residues: Glutamate--tRNA ligase (466 aa).

Residues 10 to 20 carry the 'HIGH' region motif; it reads PSPTGALHIGG. Zn(2+) is bound by residues cysteine 99, cysteine 101, cysteine 126, and aspartate 128. The short motif at 239 to 243 is the 'KMSKS' region element; that stretch reads KLSKR. Lysine 242 provides a ligand contact to ATP.

The protein belongs to the class-I aminoacyl-tRNA synthetase family. Glutamate--tRNA ligase type 1 subfamily. As to quaternary structure, monomer. Zn(2+) serves as cofactor.

The protein localises to the cytoplasm. It carries out the reaction tRNA(Glu) + L-glutamate + ATP = L-glutamyl-tRNA(Glu) + AMP + diphosphate. Catalyzes the attachment of glutamate to tRNA(Glu) in a two-step reaction: glutamate is first activated by ATP to form Glu-AMP and then transferred to the acceptor end of tRNA(Glu). This Pelagibacter ubique (strain HTCC1062) protein is Glutamate--tRNA ligase.